A 261-amino-acid polypeptide reads, in one-letter code: MFLRVIDFFQLHLRWYSVGLIFFSFIPIYYSIIVCQPQQFKIDGFELINPVFNKHHSTRSCTSATKSLQNGLIALFIFYALKIYKKVYLIVLYIILIIHFGFEIRNAKSETSRKYIAISTREMFMYYVELLLLYFQNLLLLPYICGGYFLIRHVHRIPSKEEVDRQTLKFKEEARRIKRLMIEEDWHVKEANEDVKNKIEQEGLKRKDMEFEEQLYHLRIEKVKRREQVLKQKLEEKKAKRRQNAERRKKRREIAMEQREQ.

The next 3 helical transmembrane spans lie at 15–35, 87–107, and 131–151; these read WYSV…IIVC, VYLI…IRNA, and LLLY…YFLI. Residues 234–246 show a composition bias toward basic and acidic residues; that stretch reads LEEKKAKRRQNAE. A disordered region spans residues 234–261; it reads LEEKKAKRRQNAERRKKRREIAMEQREQ.

The protein localises to the membrane. This is an uncharacterized protein from Caenorhabditis elegans.